The primary structure comprises 209 residues: MSKVTEITHPLILHKLAFIRDKNTGSKDFRELVSEVSMLMAYEVTRNLPMEEIEIETPVCKTKCKVLAGKKVAIVPILRAGLGMVDGMLQLIPAAKVGHIGLYRDEETLQPVEYFCKLPQDIAERDIIVVDPMLATGGSATDAITLLKKRGAKQIRLMCLISSPEGIEFVQKAHPDVDIYVACIDEKLNDHGYIVPGLGDAGDRLFGTK.

Residues Arg-79, Arg-104, and Asp-131–Ser-139 each bind 5-phospho-alpha-D-ribose 1-diphosphate. Uracil is bound by residues Ile-194 and Gly-199–Ala-201. Position 200 (Asp-200) interacts with 5-phospho-alpha-D-ribose 1-diphosphate.

The protein belongs to the UPRTase family. The cofactor is Mg(2+).

It catalyses the reaction UMP + diphosphate = 5-phospho-alpha-D-ribose 1-diphosphate + uracil. It functions in the pathway pyrimidine metabolism; UMP biosynthesis via salvage pathway; UMP from uracil: step 1/1. With respect to regulation, allosterically activated by GTP. In terms of biological role, catalyzes the conversion of uracil and 5-phospho-alpha-D-ribose 1-diphosphate (PRPP) to UMP and diphosphate. In Clostridium perfringens (strain SM101 / Type A), this protein is Uracil phosphoribosyltransferase.